The sequence spans 104 residues: Gastrin (104 aa).

Residues 1-21 form the signal peptide; that stretch reads MPRLCVCMLVLVLALATFSEA. Residues 22–58 constitute a propeptide that is removed on maturation; the sequence is SWKPRSQLQDASSGPRTNGALEQHQLEKLGPASHHRR. The disordered stretch occupies residues 23–104; that stretch reads WKPRSQLQDA…RSAEEEDQYN (82 aa). A compositionally biased stretch (polar residues) spans 25 to 37; the sequence is PRSQLQDASSGPR. Sulfotyrosine is present on Y87. F92 carries the phenylalanine amide modification. Residue S96 is modified to Phosphoserine. A propeptide spanning residues 96–104 is cleaved from the precursor; the sequence is SAEEEDQYN. Sulfotyrosine is present on Y103.

The protein belongs to the gastrin/cholecystokinin family. In terms of processing, sulfation on Tyr-87 enhances proteolytic processing, and blocks peptide degradation. Levels of sulfation differ between proteolytically-cleaved gastrins and between tissues.

Its subcellular location is the secreted. Gastrin stimulates the stomach mucosa to produce and secrete hydrochloric acid and the pancreas to secrete its digestive enzymes. It also stimulates smooth muscle contraction and increases blood circulation and water secretion in the stomach and intestine. The polypeptide is Gastrin (Gast) (Rattus norvegicus (Rat)).